Here is a 79-residue protein sequence, read N- to C-terminus: MLKLRLKRNGRKRQPAYRLVIMESTTRRNGRPVDEVGYYNPITKESYFNKEKIVKWLSYGVQPTETVFQLLKKSNLIEI.

It belongs to the bacterial ribosomal protein bS16 family.

It localises to the plastid. The protein resides in the chloroplast. The protein is Small ribosomal subunit protein bS16c of Thalassiosira pseudonana (Marine diatom).